A 528-amino-acid polypeptide reads, in one-letter code: Succinate-semialdehyde dehydrogenase, mitochondrial (528 aa).

The transit peptide at 1–34 directs the protein to the mitochondrion; the sequence is MVIGAAARVAIGGCRKLISSHTSLLLVSSQCRQM. 196–198 contacts NAD(+); sequence TPW. Arg-207 is a substrate binding site. Residues 222 to 225, 275 to 280, and Glu-297 contribute to the NAD(+) site; these read KPSE and GSTAVG. Glu-297 serves as the catalytic Proton acceptor. Arg-325 is a binding site for substrate. The Nucleophile role is filled by Cys-331. Residues Cys-331 and Cys-333 are joined by a disulfide bond. 428-430 lines the NAD(+) pocket; the sequence is EIF. Ser-488 provides a ligand contact to substrate.

The protein belongs to the aldehyde dehydrogenase family. As to quaternary structure, homotetramer. As to expression, expressed in developing leaf tissues.

It is found in the mitochondrion matrix. It carries out the reaction succinate semialdehyde + NAD(+) + H2O = succinate + NADH + 2 H(+). The protein operates within amino-acid degradation; 4-aminobutanoate degradation. Competitive inhibition by NADH. Inhibited by ATP, ADP and AMP. Redox-regulated. Inhibited under oxydizing conditions. In terms of biological role, oxidizes specifically succinate semialdehyde. Involved in plant response to environmental stress by preventing the accumulation of reactive oxygen species, probably by regulating proline, gamma-hydroxybutyrate (GHB) and gamma-aminobutyrate (GABA) levels. Required for the maintenance of the shoot apical meristem (SAM) structure and subsequent adaxial-abaxial axis-dependent development of cotyledons and leaves. This chain is Succinate-semialdehyde dehydrogenase, mitochondrial, found in Arabidopsis thaliana (Mouse-ear cress).